The primary structure comprises 1181 residues: Lysine-specific demethylase hairless (1181 aa).

Residues 311-323 (TPRCPSPGPPTPP) show a composition bias toward pro residues. Disordered stretches follow at residues 311–378 (TPRC…HTKL), 413–472 (AGSP…DGRI), and 509–543 (SHSQKSHKLPLEEKPLEEDSCATSEEGGGSSPEAS). Positions 347-357 (SPEGSSSGPGE) are enriched in low complexity. The segment covering 447–461 (TPETSTGSKAEAQQQ) has biased composition (polar residues). Residues 462–472 (EEQRGPRDGRI) show a composition bias toward basic and acidic residues. The short motif at 560 to 564 (LCRLL) is the LXXLL motif 1 element. The segment at 594 to 619 (CSRCHHGLFNTHWRCSHCSHRLCVAC) adopts a C6-type zinc-finger fold. Positions 696–745 (GDGGQQKEPTEKTPPAPQLSCNGDSNRTKDIKEETPDSTESPAEDRAGRS) are disordered. Positions 721 to 730 (NRTKDIKEET) are enriched in basic and acidic residues. The LXXLL motif 2 signature appears at 752-756 (LCELL). In terms of domain architecture, JmjC spans 938–1149 (DESRVENLAS…LSAQLCHQGA (212 aa)). Residues Cys999, Glu1001, and His1117 each coordinate Fe cation.

Fe(2+) serves as cofactor.

It localises to the nucleus. The catalysed reaction is N(6),N(6)-dimethyl-L-lysyl(9)-[histone H3] + 2 2-oxoglutarate + 2 O2 = L-lysyl(9)-[histone H3] + 2 formaldehyde + 2 succinate + 2 CO2. Histone demethylase that specifically demethylates both mono- and dimethylated 'Lys-9' of histone H3. May act as a transcription regulator controlling hair biology (via targeting of collagens), neural activity, and cell cycle. This is Lysine-specific demethylase hairless (Hr) from Rattus norvegicus (Rat).